A 578-amino-acid polypeptide reads, in one-letter code: Dystrotelin (578 aa).

The ZZ-type zinc-finger motif lies at 223-279 (THPARCTLCRTFPITGLRYRCLKCLNFDICQMCFLSGLHSKSHQKSHPVIEHCIQMS). The Zn(2+) site is built by C228, C231, C243, C246, C252, C255, H265, and H269. Residues 322–351 (HHAQARLLKKQLNQYKDKLQAIYTSQEERI) are a coiled coil. Residues 382–475 (RLQPPGPSSS…QSQTQKMPQK (94 aa)) are disordered. 2 stretches are compositionally biased toward basic and acidic residues: residues 399-410 (KVDHSSTEKVPK) and 431-451 (PKLD…HALR). Residues 455-472 (SPETTLHSTRAQSQTQKM) are compositionally biased toward polar residues. A coiled-coil region spans residues 503 to 537 (ALAAVEKKEAGNIKERKDELEEEELQELLSKLMDA).

The protein resides in the cell membrane. This is Dystrotelin (DYTN) from Homo sapiens (Human).